The primary structure comprises 125 residues: Probable growth factor FPV211 (125 aa).

An N-terminal signal peptide occupies residues 1-48 (MKEPLIEVKREYNLIKTLTGKKFVVSTSIVVVLLIINMIFYGIRIHEL). An EGF-like domain is found at 80-120 (LFEKCKSKFNNFCIYGECMNIINLDKKFCICNKGYTGNRCD). 3 disulfide bridges follow: C84/C97, C92/C108, and C110/C119.

The protein localises to the secreted. In Vertebrata (FPV), this protein is Probable growth factor FPV211.